The primary structure comprises 616 residues: Dihydroxy-acid dehydratase (616 aa).

Asp-81 is a Mg(2+) binding site. Cys-122 contributes to the [2Fe-2S] cluster binding site. Residues Asp-123 and Lys-124 each contribute to the Mg(2+) site. Position 124 is an N6-carboxylysine (Lys-124). Residue Cys-197 coordinates [2Fe-2S] cluster. Glu-493 provides a ligand contact to Mg(2+). The active-site Proton acceptor is the Ser-519.

The protein belongs to the IlvD/Edd family. Homodimer. [2Fe-2S] cluster is required as a cofactor. Mg(2+) serves as cofactor.

The catalysed reaction is (2R)-2,3-dihydroxy-3-methylbutanoate = 3-methyl-2-oxobutanoate + H2O. The enzyme catalyses (2R,3R)-2,3-dihydroxy-3-methylpentanoate = (S)-3-methyl-2-oxopentanoate + H2O. The protein operates within amino-acid biosynthesis; L-isoleucine biosynthesis; L-isoleucine from 2-oxobutanoate: step 3/4. Its pathway is amino-acid biosynthesis; L-valine biosynthesis; L-valine from pyruvate: step 3/4. Functionally, functions in the biosynthesis of branched-chain amino acids. Catalyzes the dehydration of (2R,3R)-2,3-dihydroxy-3-methylpentanoate (2,3-dihydroxy-3-methylvalerate) into 2-oxo-3-methylpentanoate (2-oxo-3-methylvalerate) and of (2R)-2,3-dihydroxy-3-methylbutanoate (2,3-dihydroxyisovalerate) into 2-oxo-3-methylbutanoate (2-oxoisovalerate), the penultimate precursor to L-isoleucine and L-valine, respectively. The chain is Dihydroxy-acid dehydratase from Corynebacterium kroppenstedtii (strain DSM 44385 / JCM 11950 / CIP 105744 / CCUG 35717).